Reading from the N-terminus, the 121-residue chain is Small ribosomal subunit protein uS13 (121 aa).

The segment at 97–121 is disordered; it reads VRGQRTRTNARTRRGARKTVAGKKK. Residues 100 to 121 show a composition bias toward basic residues; that stretch reads QRTRTNARTRRGARKTVAGKKK.

This sequence belongs to the universal ribosomal protein uS13 family. In terms of assembly, part of the 30S ribosomal subunit. Forms a loose heterodimer with protein S19. Forms two bridges to the 50S subunit in the 70S ribosome.

In terms of biological role, located at the top of the head of the 30S subunit, it contacts several helices of the 16S rRNA. In the 70S ribosome it contacts the 23S rRNA (bridge B1a) and protein L5 of the 50S subunit (bridge B1b), connecting the 2 subunits; these bridges are implicated in subunit movement. Contacts the tRNAs in the A and P-sites. In Synechococcus sp. (strain CC9902), this protein is Small ribosomal subunit protein uS13.